The sequence spans 636 residues: Threonine--tRNA ligase (636 aa).

The TGS domain occupies 1 to 61 (MLKITLKDGS…NENCEVEILS (61 aa)). The interval 244-534 (EHRKLGKELD…LIEHYEGKFP (291 aa)) is catalytic. 3 residues coordinate Zn(2+): C335, H386, and H511.

The protein belongs to the class-II aminoacyl-tRNA synthetase family. In terms of assembly, homodimer. Requires Zn(2+) as cofactor.

It localises to the cytoplasm. It carries out the reaction tRNA(Thr) + L-threonine + ATP = L-threonyl-tRNA(Thr) + AMP + diphosphate + H(+). Its function is as follows. Catalyzes the attachment of threonine to tRNA(Thr) in a two-step reaction: L-threonine is first activated by ATP to form Thr-AMP and then transferred to the acceptor end of tRNA(Thr). Also edits incorrectly charged L-seryl-tRNA(Thr). This chain is Threonine--tRNA ligase, found in Natranaerobius thermophilus (strain ATCC BAA-1301 / DSM 18059 / JW/NM-WN-LF).